A 423-amino-acid polypeptide reads, in one-letter code: Serine--tRNA ligase (423 aa).

231–233 (TAE) contributes to the L-serine binding site. Residue 262–264 (RSE) participates in ATP binding. Glu-285 is an L-serine binding site. 349 to 352 (EISS) contributes to the ATP binding site. L-serine is bound at residue Ser-384.

Belongs to the class-II aminoacyl-tRNA synthetase family. Type-1 seryl-tRNA synthetase subfamily. Homodimer. The tRNA molecule binds across the dimer.

It localises to the cytoplasm. It carries out the reaction tRNA(Ser) + L-serine + ATP = L-seryl-tRNA(Ser) + AMP + diphosphate + H(+). The enzyme catalyses tRNA(Sec) + L-serine + ATP = L-seryl-tRNA(Sec) + AMP + diphosphate + H(+). It functions in the pathway aminoacyl-tRNA biosynthesis; selenocysteinyl-tRNA(Sec) biosynthesis; L-seryl-tRNA(Sec) from L-serine and tRNA(Sec): step 1/1. Its function is as follows. Catalyzes the attachment of serine to tRNA(Ser). Is also able to aminoacylate tRNA(Sec) with serine, to form the misacylated tRNA L-seryl-tRNA(Sec), which will be further converted into selenocysteinyl-tRNA(Sec). The sequence is that of Serine--tRNA ligase from Lactococcus lactis subsp. lactis (strain IL1403) (Streptococcus lactis).